The following is a 754-amino-acid chain: Protein transport protein DSL1 (754 aa).

Positions 1 to 200 are interaction with TIP20; the sequence is MESLFPNKGE…QVRAKLNTIM (200 aa). Residues 406–440 form an interaction with RET1 region; sequence AVSKDDDWNWEVEDDDADAWGDEIDVNIDDEEEKT. The segment at 406 to 459 is interaction with RET2; the sequence is AVSKDDDWNWEVEDDDADAWGDEIDVNIDDEEEKTNQEKEKEPEEEENAWDEAW. Residues 425–438 are compositionally biased toward acidic residues; sequence WGDEIDVNIDDEEE. Residues 425 to 454 form a disordered region; it reads WGDEIDVNIDDEEEKTNQEKEKEPEEEENA.

Component of a peripheral membrane protein complex consisting of DSL1, SEC39/DSL3 and TIP20. Bound to a SNARE complex consisting of UFE1, USE1, SEC20 and SEC22 or YKT6 through direct interaction of TIP20 with SEC20. Binds the coatomer complex through direct interaction with RET2/COPD and RET1/COPA. Binds TIP20 and SEC39/DSL3.

It is found in the endoplasmic reticulum membrane. Functionally, required for protein transport between the Golgi and the endoplasmic reticulum. May tether coatomer-coated retrograde transport vesicles to the ER membrane through interaction with coatomer as well as the SNARE complex. May contribute to the stabilization of the SNARE complex. The polypeptide is Protein transport protein DSL1 (DSL1) (Saccharomyces cerevisiae (strain ATCC 204508 / S288c) (Baker's yeast)).